The chain runs to 347 residues: Haptoglobin (347 aa).

An N-terminal signal peptide occupies residues 1–18; it reads MRALGAVVTLLLWGQLFA. The Sushi domain occupies 31–88; it reads DSCPKPPEIANGYVEHLVRYRCRQFYRLRTEGDGVYTLNDEKQWVNTAAGEKLPECEA. Cystine bridges form between Cys52-Cys86, Cys90-Cys207, Cys250-Cys281, and Cys292-Cys322. Positions 103–345 constitute a Peptidase S1 domain; sequence IIGGSMDAKG…LKDWVQETMA (243 aa). N-linked (GlcNAc...) asparagine glycans are attached at residues Asn148, Asn182, Asn256, and Asn264. Positions 259–264 are interaction with CD163; that stretch reads VPEKKN.

Belongs to the peptidase S1 family. Tetramer of two alpha and two beta chains; disulfide-linked. The hemoglobin/haptoglobin complex is composed of a haptoglobin dimer bound to two hemoglobin alpha-beta dimers. Interacts with CD163. Interacts with ERGIC3. Expressed by the liver and secreted in plasma.

It is found in the secreted. In terms of biological role, as a result of hemolysis, hemoglobin is found to accumulate in the kidney and is secreted in the urine. Haptoglobin captures, and combines with free plasma hemoglobin to allow hepatic recycling of heme iron and to prevent kidney damage. Haptoglobin also acts as an antioxidant, has antibacterial activity and plays a role in modulating many aspects of the acute phase response. Hemoglobin/haptoglobin complexes are rapidly cleared by the macrophage CD163 scavenger receptor expressed on the surface of liver Kupfer cells through an endocytic lysosomal degradation pathway. The protein is Haptoglobin (Hp) of Mus saxicola (Brown spiny mouse).